The primary structure comprises 219 residues: 2-hydroxy-3-keto-5-methylthiopentenyl-1-phosphate phosphatase (219 aa).

Belongs to the HAD-like hydrolase superfamily. MtnX family.

It carries out the reaction 2-hydroxy-5-methylsulfanyl-3-oxopent-1-enyl phosphate + H2O = 1,2-dihydroxy-5-(methylsulfanyl)pent-1-en-3-one + phosphate. It participates in amino-acid biosynthesis; L-methionine biosynthesis via salvage pathway; L-methionine from S-methyl-5-thio-alpha-D-ribose 1-phosphate: step 4/6. Its function is as follows. Dephosphorylates 2-hydroxy-3-keto-5-methylthiopentenyl-1-phosphate (HK-MTPenyl-1-P) yielding 1,2-dihydroxy-3-keto-5-methylthiopentene (DHK-MTPene). This Bacillus cereus (strain B4264) protein is 2-hydroxy-3-keto-5-methylthiopentenyl-1-phosphate phosphatase.